The chain runs to 287 residues: Phosphatidylserine decarboxylase proenzyme (287 aa).

Residues aspartate 89, histidine 146, and serine 252 each act as charge relay system; for autoendoproteolytic cleavage activity in the active site. Serine 252 serves as the catalytic Schiff-base intermediate with substrate; via pyruvic acid; for decarboxylase activity. Position 252 is a pyruvic acid (Ser); by autocatalysis (serine 252).

This sequence belongs to the phosphatidylserine decarboxylase family. PSD-B subfamily. Prokaryotic type I sub-subfamily. In terms of assembly, heterodimer of a large membrane-associated beta subunit and a small pyruvoyl-containing alpha subunit. Pyruvate is required as a cofactor. Post-translationally, is synthesized initially as an inactive proenzyme. Formation of the active enzyme involves a self-maturation process in which the active site pyruvoyl group is generated from an internal serine residue via an autocatalytic post-translational modification. Two non-identical subunits are generated from the proenzyme in this reaction, and the pyruvate is formed at the N-terminus of the alpha chain, which is derived from the carboxyl end of the proenzyme. The autoendoproteolytic cleavage occurs by a canonical serine protease mechanism, in which the side chain hydroxyl group of the serine supplies its oxygen atom to form the C-terminus of the beta chain, while the remainder of the serine residue undergoes an oxidative deamination to produce ammonia and the pyruvoyl prosthetic group on the alpha chain. During this reaction, the Ser that is part of the protease active site of the proenzyme becomes the pyruvoyl prosthetic group, which constitutes an essential element of the active site of the mature decarboxylase.

The protein localises to the cell membrane. It catalyses the reaction a 1,2-diacyl-sn-glycero-3-phospho-L-serine + H(+) = a 1,2-diacyl-sn-glycero-3-phosphoethanolamine + CO2. The protein operates within phospholipid metabolism; phosphatidylethanolamine biosynthesis; phosphatidylethanolamine from CDP-diacylglycerol: step 2/2. Catalyzes the formation of phosphatidylethanolamine (PtdEtn) from phosphatidylserine (PtdSer). The polypeptide is Phosphatidylserine decarboxylase proenzyme (Shewanella halifaxensis (strain HAW-EB4)).